The following is a 20-amino-acid chain: Probable cinnamyl alcohol dehydrogenase 1 (20 aa).

Belongs to the zinc-containing alcohol dehydrogenase family. Requires Zn(2+) as cofactor.

The catalysed reaction is (E)-cinnamyl alcohol + NADP(+) = (E)-cinnamaldehyde + NADPH + H(+). It carries out the reaction (E)-coniferol + NADP(+) = (E)-coniferaldehyde + NADPH + H(+). The enzyme catalyses (E)-sinapyl alcohol + NADP(+) = (E)-sinapaldehyde + NADPH + H(+). It catalyses the reaction (E)-4-coumaroyl alcohol + NADP(+) = (E)-4-coumaraldehyde + NADPH + H(+). The catalysed reaction is (E)-caffeyl alcohol + NADP(+) = (E)-caffeyl aldehyde + NADPH + H(+). It participates in aromatic compound metabolism; phenylpropanoid biosynthesis. Its function is as follows. Involved in lignin biosynthesis. Catalyzes the final step specific for the production of lignin monomers, like coniferyl alcohol, sinapyl alcohol and 4-coumaryl alcohol. The protein is Probable cinnamyl alcohol dehydrogenase 1 of Pseudotsuga menziesii (Douglas-fir).